The sequence spans 498 residues: ATP synthase subunit beta, chloroplastic (498 aa).

172–179 (GGAGVGKT) contributes to the ATP binding site.

This sequence belongs to the ATPase alpha/beta chains family. As to quaternary structure, F-type ATPases have 2 components, CF(1) - the catalytic core - and CF(0) - the membrane proton channel. CF(1) has five subunits: alpha(3), beta(3), gamma(1), delta(1), epsilon(1). CF(0) has four main subunits: a(1), b(1), b'(1) and c(9-12).

Its subcellular location is the plastid. It is found in the chloroplast thylakoid membrane. It carries out the reaction ATP + H2O + 4 H(+)(in) = ADP + phosphate + 5 H(+)(out). In terms of biological role, produces ATP from ADP in the presence of a proton gradient across the membrane. The catalytic sites are hosted primarily by the beta subunits. The protein is ATP synthase subunit beta, chloroplastic of Nicotiana tabacum (Common tobacco).